Consider the following 760-residue polypeptide: Penicillin-binding protein 1B (760 aa).

Topologically, residues 1–8 are cytoplasmic; the sequence is MFFNFKKY. Residues 9–29 form a helical; Signal-anchor for type II membrane protein membrane-spanning segment; that stretch reads FLIKVFFFVLILTLCYGLYLY. At 30 to 760 the chain is on the extracellular side; it reads VKINRFINGK…NFLFWLKNLF (731 aa). The segment at 136-308 is transglycosylase; the sequence is FRLEPKLIAM…SLYSPWTNPN (173 aa). The active-site Proton donor; for transglycosylase activity is E174. The transpeptidase stretch occupies residues 392 to 684; the sequence is EQAVKIEIPI…SSGAMQIYKR (293 aa). Residue S451 is the Acyl-ester intermediate; for transpeptidase activity of the active site.

In the N-terminal section; belongs to the glycosyltransferase 51 family. This sequence in the C-terminal section; belongs to the transpeptidase family.

The protein resides in the cell membrane. It catalyses the reaction [GlcNAc-(1-&gt;4)-Mur2Ac(oyl-L-Ala-gamma-D-Glu-L-Lys-D-Ala-D-Ala)](n)-di-trans,octa-cis-undecaprenyl diphosphate + beta-D-GlcNAc-(1-&gt;4)-Mur2Ac(oyl-L-Ala-gamma-D-Glu-L-Lys-D-Ala-D-Ala)-di-trans,octa-cis-undecaprenyl diphosphate = [GlcNAc-(1-&gt;4)-Mur2Ac(oyl-L-Ala-gamma-D-Glu-L-Lys-D-Ala-D-Ala)](n+1)-di-trans,octa-cis-undecaprenyl diphosphate + di-trans,octa-cis-undecaprenyl diphosphate + H(+). The catalysed reaction is Preferential cleavage: (Ac)2-L-Lys-D-Ala-|-D-Ala. Also transpeptidation of peptidyl-alanyl moieties that are N-acyl substituents of D-alanine.. Its pathway is cell wall biogenesis; peptidoglycan biosynthesis. Its function is as follows. Cell wall formation. Synthesis of cross-linked peptidoglycan from the lipid intermediates. The enzyme has a penicillin-insensitive transglycosylase N-terminal domain (formation of linear glycan strands) and a penicillin-sensitive transpeptidase C-terminal domain (cross-linking of the peptide subunits). The polypeptide is Penicillin-binding protein 1B (mrcB) (Buchnera aphidicola subsp. Acyrthosiphon pisum (strain APS) (Acyrthosiphon pisum symbiotic bacterium)).